The chain runs to 142 residues: Small ribosomal subunit protein uS8c (142 aa).

Belongs to the universal ribosomal protein uS8 family. As to quaternary structure, part of the 30S ribosomal subunit.

The protein localises to the plastid. In terms of biological role, one of the primary rRNA binding proteins, it binds directly to 16S rRNA central domain where it helps coordinate assembly of the platform of the 30S subunit. This chain is Small ribosomal subunit protein uS8c (rps8), found in Euglena longa (Euglenophycean alga).